Reading from the N-terminus, the 315-residue chain is tRNA dimethylallyltransferase (315 aa).

13–20 (GPTAVGKT) contacts ATP. 15–20 (TAVGKT) is a binding site for substrate. The interval 38–41 (DSRL) is interaction with substrate tRNA.

This sequence belongs to the IPP transferase family. In terms of assembly, monomer. The cofactor is Mg(2+).

It catalyses the reaction adenosine(37) in tRNA + dimethylallyl diphosphate = N(6)-dimethylallyladenosine(37) in tRNA + diphosphate. Catalyzes the transfer of a dimethylallyl group onto the adenine at position 37 in tRNAs that read codons beginning with uridine, leading to the formation of N6-(dimethylallyl)adenosine (i(6)A). The sequence is that of tRNA dimethylallyltransferase from Herpetosiphon aurantiacus (strain ATCC 23779 / DSM 785 / 114-95).